A 569-amino-acid polypeptide reads, in one-letter code: BTB/POZ domain-containing protein At3g50840 (569 aa).

A BTB domain is found at 18–87 (SDIEIEVDDI…SYGFKVDISV (70 aa)). The region spanning 194–459 (ELWFEDLTEL…VQVLFLEQLQ (266 aa)) is the NPH3 domain. A compositionally biased stretch (low complexity) spans 240 to 259 (ISRSSSASSSSSSSSTTIAS). The segment at 240–261 (ISRSSSASSSSSSSSTTIASEN) is disordered. Tyr400 is subject to Phosphotyrosine.

This sequence belongs to the NPH3 family.

It functions in the pathway protein modification; protein ubiquitination. Functionally, may act as a substrate-specific adapter of an E3 ubiquitin-protein ligase complex (CUL3-RBX1-BTB) which mediates the ubiquitination and subsequent proteasomal degradation of target proteins. The protein is BTB/POZ domain-containing protein At3g50840 of Arabidopsis thaliana (Mouse-ear cress).